Here is a 199-residue protein sequence, read N- to C-terminus: Imidazoleglycerol-phosphate dehydratase (199 aa).

This sequence belongs to the imidazoleglycerol-phosphate dehydratase family.

It localises to the cytoplasm. It catalyses the reaction D-erythro-1-(imidazol-4-yl)glycerol 3-phosphate = 3-(imidazol-4-yl)-2-oxopropyl phosphate + H2O. It functions in the pathway amino-acid biosynthesis; L-histidine biosynthesis; L-histidine from 5-phospho-alpha-D-ribose 1-diphosphate: step 6/9. This is Imidazoleglycerol-phosphate dehydratase from Roseiflexus sp. (strain RS-1).